A 274-amino-acid polypeptide reads, in one-letter code: Orotidine 5'-phosphate decarboxylase (274 aa).

The active-site Proton donor is the lysine 96.

The protein belongs to the OMP decarboxylase family. Type 2 subfamily.

It carries out the reaction orotidine 5'-phosphate + H(+) = UMP + CO2. It participates in pyrimidine metabolism; UMP biosynthesis via de novo pathway; UMP from orotate: step 2/2. In Bacteroides fragilis (strain ATCC 25285 / DSM 2151 / CCUG 4856 / JCM 11019 / LMG 10263 / NCTC 9343 / Onslow / VPI 2553 / EN-2), this protein is Orotidine 5'-phosphate decarboxylase.